The primary structure comprises 164 residues: ATP synthase subunit b 1 (164 aa).

A helical transmembrane segment spans residues 8–28; it reads AETWVAVGFAILMVVFVYFGV.

The protein belongs to the ATPase B chain family. As to quaternary structure, F-type ATPases have 2 components, F(1) - the catalytic core - and F(0) - the membrane proton channel. F(1) has five subunits: alpha(3), beta(3), gamma(1), delta(1), epsilon(1). F(0) has three main subunits: a(1), b(2) and c(10-14). The alpha and beta chains form an alternating ring which encloses part of the gamma chain. F(1) is attached to F(0) by a central stalk formed by the gamma and epsilon chains, while a peripheral stalk is formed by the delta and b chains.

The protein resides in the cell inner membrane. In terms of biological role, f(1)F(0) ATP synthase produces ATP from ADP in the presence of a proton or sodium gradient. F-type ATPases consist of two structural domains, F(1) containing the extramembraneous catalytic core and F(0) containing the membrane proton channel, linked together by a central stalk and a peripheral stalk. During catalysis, ATP synthesis in the catalytic domain of F(1) is coupled via a rotary mechanism of the central stalk subunits to proton translocation. Its function is as follows. Component of the F(0) channel, it forms part of the peripheral stalk, linking F(1) to F(0). This chain is ATP synthase subunit b 1, found in Rhodopseudomonas palustris (strain BisA53).